Consider the following 1018-residue polypeptide: Cell wall protein 1 (1018 aa).

Residues 1–17 form the signal peptide; it reads MLPSIVISIVLASFVSA. The 112-residue stretch at 32–143 folds into the CFEM 1 domain; it reads NPYTIYPSVA…SSLSAAATAV (112 aa). Disulfide bonds link cysteine 60–cysteine 100, cysteine 64–cysteine 95, cysteine 74–cysteine 81, and cysteine 83–cysteine 116. Residue aspartate 78 participates in heme binding. Residues 147-227 are disordered; the sequence is SEQPVETSSE…STPEDNPYTI (81 aa). A compositionally biased stretch (polar residues) spans 148–164; it reads EQPVETSSEPAGSSQSV. The segment covering 165–221 has biased composition (low complexity); that stretch reads ESSQPAETSSSEPAETSSSEPAETSSETSSEQPASSEPAETSSEESSTITSAPSTPE. CFEM domains lie at 223-334 and 393-504; these read NPYT…ATAV and SSSS…ATAV. 4 disulfides stabilise this stretch: cysteine 251–cysteine 291, cysteine 255–cysteine 286, cysteine 265–cysteine 272, and cysteine 274–cysteine 307. Heme is bound at residue aspartate 269. The disordered stretch occupies residues 338-396; sequence SEQSVETSSESAESSQSVESSQPAETSSEQPSETSSETSSQQLSSITSAPDSSATSSSS. 4 disulfide bridges follow: cysteine 421–cysteine 461, cysteine 425–cysteine 456, cysteine 435–cysteine 442, and cysteine 444–cysteine 477. Aspartate 439 contributes to the heme binding site. The interval 507–557 is disordered; it reads SDSASETASQEPSETSSEQPSETASQQPAETSSEESSTITSAPSTPEDNPY. A compositionally biased stretch (low complexity) spans 509-553; sequence SASETASQEPSETSSEQPSETASQQPAETSSEESSTITSAPSTPE. The 112-residue stretch at 555-666 folds into the CFEM 4 domain; it reads NPYTIYPSVA…SSLNAAATAV (112 aa). 4 cysteine pairs are disulfide-bonded: cysteine 583/cysteine 623, cysteine 587/cysteine 618, cysteine 597/cysteine 604, and cysteine 606/cysteine 639. Aspartate 601 contacts heme. The disordered stretch occupies residues 677–785; the sequence is SASESASQVP…STSTKSDAAS (109 aa). The span at 690 to 766 shows a compositional bias: low complexity; sequence SAASSQSANN…AISESVAPSS (77 aa). N-linked (GlcNAc...) asparagine glycans are attached at residues asparagine 698, asparagine 708, asparagine 718, asparagine 729, asparagine 743, asparagine 753, asparagine 769, asparagine 798, and asparagine 965. Positions 767–785 are enriched in polar residues; the sequence is YGNSTIAQPSTSTKSDAAS. Serine 989 carries GPI-anchor amidated serine lipidation. A propeptide spans 990-1018 (removed in mature form); that stretch reads VAIANMANTKFASTMSLLVASFVFVGLFI.

Belongs to the RBT5 family. In terms of processing, the GPI-anchor is attached to the protein in the endoplasmic reticulum and serves to target the protein to the cell surface. There, the glucosamine-inositol phospholipid moiety is cleaved off and the GPI-modified mannoprotein is covalently attached via its lipidless GPI glycan remnant to the 1,6-beta-glucan of the outer cell wall layer.

The protein resides in the secreted. Its subcellular location is the cell wall. The protein localises to the membrane. In terms of biological role, heme-binding protein involved in heme-iron utilization. The ability to acquire iron from host tissues is a major virulence factor of pathogenic microorganisms. Required for biofilm formation. In Candida albicans (strain SC5314 / ATCC MYA-2876) (Yeast), this protein is Cell wall protein 1 (CSA1).